We begin with the raw amino-acid sequence, 210 residues long: DNA-directed RNA polymerase subunit 5-like protein 1 (210 aa).

This sequence belongs to the archaeal Rpo5/eukaryotic RPB5 RNA polymerase subunit family.

The protein resides in the nucleus. The chain is DNA-directed RNA polymerase subunit 5-like protein 1 (NRPB5L1) from Arabidopsis thaliana (Mouse-ear cress).